A 266-amino-acid chain; its full sequence is Tryptophan synthase alpha chain (266 aa).

Residues Glu46 and Asp57 each act as proton acceptor in the active site.

Belongs to the TrpA family. As to quaternary structure, tetramer of two alpha and two beta chains.

It catalyses the reaction (1S,2R)-1-C-(indol-3-yl)glycerol 3-phosphate + L-serine = D-glyceraldehyde 3-phosphate + L-tryptophan + H2O. It participates in amino-acid biosynthesis; L-tryptophan biosynthesis; L-tryptophan from chorismate: step 5/5. Its function is as follows. The alpha subunit is responsible for the aldol cleavage of indoleglycerol phosphate to indole and glyceraldehyde 3-phosphate. This chain is Tryptophan synthase alpha chain, found in Lacticaseibacillus casei (Lactobacillus casei).